The following is a 586-amino-acid chain: Aspartate--tRNA(Asp/Asn) ligase (586 aa).

E172 lines the L-aspartate pocket. Positions 196–199 (QLYK) are aspartate. Residue R218 participates in L-aspartate binding. ATP is bound by residues 218-220 (RDE) and Q227. H446 is an L-aspartate binding site. Residue E480 participates in ATP binding. R487 is an L-aspartate binding site. 532–535 (GIDR) is a binding site for ATP.

It belongs to the class-II aminoacyl-tRNA synthetase family. Type 1 subfamily. In terms of assembly, homodimer.

Its subcellular location is the cytoplasm. It carries out the reaction tRNA(Asx) + L-aspartate + ATP = L-aspartyl-tRNA(Asx) + AMP + diphosphate. Aspartyl-tRNA synthetase with relaxed tRNA specificity since it is able to aspartylate not only its cognate tRNA(Asp) but also tRNA(Asn). Reaction proceeds in two steps: L-aspartate is first activated by ATP to form Asp-AMP and then transferred to the acceptor end of tRNA(Asp/Asn). This is Aspartate--tRNA(Asp/Asn) ligase from Borrelia garinii subsp. bavariensis (strain ATCC BAA-2496 / DSM 23469 / PBi) (Borreliella bavariensis).